The following is a 433-amino-acid chain: N-lysine methyltransferase SMYD2 (433 aa).

One can recognise an SET domain in the interval 7 to 241 (GGLERFCSAG…PGDEVFTSYI (235 aa)). 17-19 (KGR) provides a ligand contact to S-adenosyl-L-methionine. Cys-52, Cys-55, Cys-65, Cys-68, Cys-74, Cys-78, His-86, and Cys-90 together coordinate Zn(2+). An MYND-type zinc finger spans residues 52 to 90 (CECCFARKEGLSKCGRCKQAFYCDVECQKEDWPLHKLEC). Residues His-137, 206–207 (NH), and 258–260 (YFF) contribute to the S-adenosyl-L-methionine site. At Ser-283 the chain carries Phosphoserine.

The protein belongs to the class V-like SAM-binding methyltransferase superfamily. Interacts (via MYND-type zinc finger) with EPB41L3. Interacts (via SET domain) with p53/TP53. Interacts with RB1 and HSP90AA1. Interacts with RNA polymerase II and HELZ. Interacts with SIN3A and HDAC1. In terms of tissue distribution, highly expressed in heart, skeletal muscle and brain tissue. During cardiac development, it is differentially expressed with highest expression in the neonatal heart while very low expression is detected at 12.5 dpc and adult. Specifically expressed in cardiomyocytes (at protein level).

The protein localises to the cytoplasm. Its subcellular location is the cytosol. It localises to the nucleus. The enzyme catalyses L-lysyl(4)-[histone H3] + 3 S-adenosyl-L-methionine = N(6),N(6),N(6)-trimethyl-L-lysyl(4)-[histone H3] + 3 S-adenosyl-L-homocysteine + 3 H(+). The catalysed reaction is L-lysyl-[protein] + S-adenosyl-L-methionine = N(6)-methyl-L-lysyl-[protein] + S-adenosyl-L-homocysteine + H(+). Functionally, protein-lysine N-methyltransferase that methylates both histones and non-histone proteins, including p53/TP53 and RB1. Specifically trimethylates histone H3 'Lys-4' (H3K4me3) in vivo. The activity requires interaction with HSP90alpha. Shows even higher methyltransferase activity on p53/TP53. Monomethylates 'Lys-370' of p53/TP53, leading to decreased DNA-binding activity and subsequent transcriptional regulation activity of p53/TP53. Monomethylates RB1 at 'Lys-860'. This Mus musculus (Mouse) protein is N-lysine methyltransferase SMYD2 (Smyd2).